The chain runs to 192 residues: UPF0312 protein Avin_03250 (192 aa).

An N-terminal signal peptide occupies residues 1 to 23 (MLKKTLAALALGSALLGAGQAMA).

This sequence belongs to the UPF0312 family. Type 1 subfamily.

The protein resides in the periplasm. The chain is UPF0312 protein Avin_03250 from Azotobacter vinelandii (strain DJ / ATCC BAA-1303).